The sequence spans 439 residues: Agnestins biosynthesis cluster transcriptional coactivator AgnL9 (439 aa).

An HTH iclR-type domain is found at 79-149; the sequence is MTIQTQLLAC…EPGHITHSAL (71 aa). The segment at residues 109–128 is a DNA-binding region (H-T-H motif); sequence MKDVSELIDVPENQLGRIVR.

The protein resides in the nucleus. In terms of biological role, transcriptional coactivator; part of the gene cluster that mediates the biosynthesis of agnestins, dihydroxy-xanthone metabolites. The chain is Agnestins biosynthesis cluster transcriptional coactivator AgnL9 from Paecilomyces divaricatus (Penicillium divaricatum).